The chain runs to 660 residues: Tripartite terminase subunit 3 (660 aa).

The short motif at 203-210 (VPRRHGKT) is the Walker A motif element. A Walker B motif motif is present at residues 294–299 (ILLVDE). The active-site For ATPase activity is the E299. Active-site for nuclease activity residues include D452, E523, and D637.

It belongs to the herpesviridae TRM3 protein family. Interacts with the terminase subunits TRM1 and TRM2. Interacts with portal protein.

Its subcellular location is the host nucleus. In terms of biological role, component of the molecular motor that translocates viral genomic DNA in empty capsid during DNA packaging. Forms a tripartite terminase complex together with TRM1 and TRM2 in the host cytoplasm. Once the complex reaches the host nucleus, it interacts with the capsid portal vertex. This portal forms a ring in which genomic DNA is translocated into the capsid. TRM3 carries an RNase H-like nuclease activity that plays an important role for the cleavage of concatemeric viral DNA into unit length genomes. This chain is Tripartite terminase subunit 3, found in Elephas maximus (Indian elephant).